A 326-amino-acid chain; its full sequence is Probable fructokinase-4 (326 aa).

Belongs to the carbohydrate kinase PfkB family.

It carries out the reaction D-fructose + ATP = D-fructose 6-phosphate + ADP + H(+). The protein operates within glycan biosynthesis; starch biosynthesis. In terms of biological role, may play an important role in maintaining the flux of carbon towards starch formation. The chain is Probable fructokinase-4 from Arabidopsis thaliana (Mouse-ear cress).